Consider the following 551-residue polypeptide: MFRNALRQSTRAVGAFSATGRVAARNAAPVVSAVQARTYADAKATPTEVSSILEQRIRGVQEESNLAETGRVLSVGDGIARVHGMANVQAEELVEFASGVKGMCMNLEAGQVGVVLFGSDRLVKEGETVKRTGEIVDVPVGPELLGRVIDALGNPIDGKGPINCKEKRRAQLKAPGILPRQSVNQPVQTGLKSVDAMVPIGRGQRELIIGDRQTGKTAVALDAILNQKRWNSGSDEDKKLYCVYVAVGQKRSTVAQLVKTLEENDAMKYSIVVAATASEAAPLQYLAPFTGACVGEYFRDNGKHSLVIFDDLTKQAVAYRQMSLLLRRPPGREAYPGDVFYLHSRLLERAAKMNKTHGGGSMTALPVIETQGGDVSAYIPTNVISITDGQIFLESELFYKGVRPAINVGLSVSRVGSAAQLKAMKQVAGSLKLFLAQYREVAAFAQFGSDLDAATKQTLNRGERLTELLKQKQYSPMAVNEMVPLIFAGVNGFLDSVPVAKILQWEADFLAHLKTNEPEIMATIDKEGAISKDLEAKLRDVIQTFTKSFLG.

210 to 217 (GDRQTGKT) is a binding site for ATP.

This sequence belongs to the ATPase alpha/beta chains family. F-type ATPases have 2 components, CF(1) - the catalytic core - and CF(0) - the membrane proton channel. CF(1) has five subunits: alpha(3), beta(3), gamma(1), delta(1), epsilon(1). CF(0) has three main subunits: a, b and c.

It localises to the mitochondrion. The protein localises to the mitochondrion inner membrane. Mitochondrial membrane ATP synthase (F(1)F(0) ATP synthase or Complex V) produces ATP from ADP in the presence of a proton gradient across the membrane which is generated by electron transport complexes of the respiratory chain. F-type ATPases consist of two structural domains, F(1) - containing the extramembraneous catalytic core, and F(0) - containing the membrane proton channel, linked together by a central stalk and a peripheral stalk. During catalysis, ATP synthesis in the catalytic domain of F(1) is coupled via a rotary mechanism of the central stalk subunits to proton translocation. Subunits alpha and beta form the catalytic core in F(1). Rotation of the central stalk against the surrounding alpha(3)beta(3) subunits leads to hydrolysis of ATP in three separate catalytic sites on the beta subunits. Subunit alpha does not bear the catalytic high-affinity ATP-binding sites. The chain is ATP synthase subunit alpha, mitochondrial (atp-1) from Neurospora crassa (strain ATCC 24698 / 74-OR23-1A / CBS 708.71 / DSM 1257 / FGSC 987).